Here is a 152-residue protein sequence, read N- to C-terminus: Ribonuclease HI (152 aa).

Residues Met-1–Glu-142 enclose the RNase H type-1 domain. Mg(2+) contacts are provided by Asp-10, Glu-48, Asp-70, and Asp-134.

Belongs to the RNase H family. As to quaternary structure, monomer. Requires Mg(2+) as cofactor.

It localises to the cytoplasm. The catalysed reaction is Endonucleolytic cleavage to 5'-phosphomonoester.. Its function is as follows. Endonuclease that specifically degrades the RNA of RNA-DNA hybrids. This is Ribonuclease HI (rnhA) from Rickettsia prowazekii (strain Madrid E).